A 360-amino-acid polypeptide reads, in one-letter code: Farnesyl pyrophosphate synthase (360 aa).

Isopentenyl diphosphate is bound by residues K52, R55, and Q90. 2 residues coordinate Mg(2+): D97 and D101. R106 contributes to the dimethylallyl diphosphate binding site. R107 contacts isopentenyl diphosphate. Dimethylallyl diphosphate-binding residues include K194, T195, Q237, K254, and K263.

The protein belongs to the FPP/GGPP synthase family. Mg(2+) serves as cofactor.

The catalysed reaction is isopentenyl diphosphate + dimethylallyl diphosphate = (2E)-geranyl diphosphate + diphosphate. It carries out the reaction isopentenyl diphosphate + (2E)-geranyl diphosphate = (2E,6E)-farnesyl diphosphate + diphosphate. Its pathway is isoprenoid biosynthesis; farnesyl diphosphate biosynthesis; farnesyl diphosphate from geranyl diphosphate and isopentenyl diphosphate: step 1/1. It functions in the pathway isoprenoid biosynthesis; geranyl diphosphate biosynthesis; geranyl diphosphate from dimethylallyl diphosphate and isopentenyl diphosphate: step 1/1. Functionally, farnesyl pyrophosphate synthase; part of the second module of ergosterol biosynthesis pathway that includes the middle steps of the pathway. The second module involves the formation of farnesyl diphosphate, which is also an important intermediate in the biosynthesis of ubiquinone, dolichol, heme and prenylated proteins. This module also plays a key role in the biosynthesis of triterpenes such as ganoderic acids (GA), a group of highly oxygenated lanostane-type triterpenoids which are well recognized as a main group of unique bioactive compounds in the medicinal mushroom Ganoderma lucidum. Activity by the mevalonate kinase first converts mevalonate into 5-phosphomevalonate. 5-phosphomevalonate is then further converted to 5-diphosphomevalonate by the phosphomevalonate kinase. The diphosphomevalonate decarboxylase MVD then produces isopentenyl diphosphate. The isopentenyl-diphosphate delta-isomerase then catalyzes the 1,3-allylic rearrangement of the homoallylic substrate isopentenyl (IPP) to its highly electrophilic allylic isomer, dimethylallyl diphosphate (DMAPP). Finally the farnesyl diphosphate synthase FPS catalyzes the sequential condensation of isopentenyl pyrophosphate with dimethylallyl pyrophosphate, and then with the resultant geranylpyrophosphate to the ultimate product farnesyl pyrophosphate. This is Farnesyl pyrophosphate synthase from Ganoderma lucidum (Ling zhi medicinal fungus).